Reading from the N-terminus, the 297-residue chain is HTH-type transcriptional regulator ArgP (297 aa).

One can recognise an HTH lysR-type domain in the interval 4 to 60 (PDYRTLQALDAVIRERGFERAAQKLCITQSAVSQRIKQLENMFGQPLLVRTVPPRPT). The segment at residues 21-40 (FERAAQKLCITQSAVSQRIK) is a DNA-binding region (H-T-H motif).

The protein belongs to the LysR transcriptional regulatory family. Homodimer.

In terms of biological role, controls the transcription of genes involved in arginine and lysine metabolism. This is HTH-type transcriptional regulator ArgP from Escherichia fergusonii (strain ATCC 35469 / DSM 13698 / CCUG 18766 / IAM 14443 / JCM 21226 / LMG 7866 / NBRC 102419 / NCTC 12128 / CDC 0568-73).